The following is a 325-amino-acid chain: DDB1- and CUL4-associated factor 7 homolog (325 aa).

WD repeat units lie at residues 62–104 (EHPY…RSIK), 115–155 (EFCA…AKTQ), 158–197 (AHDK…HSTI), and 247–287 (FHKS…KPIE).

It belongs to the WD repeat DCAF7 family.

This is DDB1- and CUL4-associated factor 7 homolog (wdr68) from Dictyostelium discoideum (Social amoeba).